We begin with the raw amino-acid sequence, 332 residues long: Protoheme IX farnesyltransferase (332 aa).

Transmembrane regions (helical) follow at residues 63-83, 109-129, 132-152, 160-180, 188-208, 245-265, and 286-306; these read LICT…LNCL, TVFL…ISGV, LAAG…TIIL, IVFG…AATG, WLFG…AILL, ILGV…LLPF, and AKGL…LLLI.

It belongs to the UbiA prenyltransferase family. Protoheme IX farnesyltransferase subfamily.

Its subcellular location is the cell inner membrane. The catalysed reaction is heme b + (2E,6E)-farnesyl diphosphate + H2O = Fe(II)-heme o + diphosphate. It functions in the pathway porphyrin-containing compound metabolism; heme O biosynthesis; heme O from protoheme: step 1/1. Its function is as follows. Converts heme B (protoheme IX) to heme O by substitution of the vinyl group on carbon 2 of heme B porphyrin ring with a hydroxyethyl farnesyl side group. The polypeptide is Protoheme IX farnesyltransferase (Prochlorococcus marinus (strain MIT 9515)).